A 117-amino-acid polypeptide reads, in one-letter code: Putative membrane protein insertion efficiency factor (117 aa).

The protein belongs to the UPF0161 family.

The protein localises to the cell inner membrane. Its function is as follows. Could be involved in insertion of integral membrane proteins into the membrane. This chain is Putative membrane protein insertion efficiency factor, found in Bartonella bacilliformis (strain ATCC 35685 / KC583 / Herrer 020/F12,63).